Here is a 755-residue protein sequence, read N- to C-terminus: E3 ubiquitin-protein ligase TRIM56 (755 aa).

The RING-type zinc-finger motif lies at 21-60 (CKICLEQLRAPKTLPCLHTYCQDCLAQLADGGRVRCPECR). B box-type zinc fingers lie at residues 98 to 149 (KPAC…VVDL) and 164 to 205 (RQAA…CLPL). Cys169, His172, Cys192, and His197 together coordinate Zn(2+). Residues 216-314 (LEGLLAGVDN…AAAFARRVLS (99 aa)) are a coiled coil. A disordered region spans residues 371 to 484 (EEQQPQKDGG…SPALGPNLDG (114 aa)). The segment covering 392-404 (SQSRREDEPKTER) has biased composition (basic and acidic residues). Residues Thr418 and Thr442 each carry the phosphothreonine modification. The span at 419 to 447 (PKEEKAQTTREEGAQTLEEDRAQTPHEDG) shows a compositional bias: basic and acidic residues. Residues 453 to 469 (RGGRPNKKKKFKGRLKS) show a composition bias toward basic residues. Ser475 is subject to Phosphoserine.

It belongs to the TRIM/RBCC family. Homooligomer. Interacts with STING1. Interacts with TICAM1. (Microbial infection) Preferentially ubiquitinated with 'Lys-48' and 'Lys-11'-linked ubiquitin chains by Salmonella effector SopA leading to proteasomal targeting and degradation. In terms of processing, autoubiquitinated. As to expression, widely expressed (at protein level).

It is found in the cytoplasm. The catalysed reaction is S-ubiquitinyl-[E2 ubiquitin-conjugating enzyme]-L-cysteine + [acceptor protein]-L-lysine = [E2 ubiquitin-conjugating enzyme]-L-cysteine + N(6)-ubiquitinyl-[acceptor protein]-L-lysine.. It participates in protein modification; protein ubiquitination. Functionally, E3 ubiquitin-protein ligase that plays a key role in innate antiviral immunity by mediating ubiquitination of CGAS and STING1. In response to pathogen- and host-derived double-stranded DNA (dsDNA), targets STING1 to 'Lys-63'-linked ubiquitination, thereby promoting its homodimerization, a step required for the production of type I interferon IFN-beta. Also mediate monoubiquitination of CGAS, thereby promoting CGAS oligomerization and subsequent activation. Promotes also TNFalpha-induced NF-kappa-B signaling by mediating 'Lys-63'-linked ubiquitination TAK1, leading to enhanced interaction between TAK1 and CHUK/IKKalpha. Independently of its E3 ubiquitin ligase activity, positive regulator of TLR3 signaling. Potentiates extracellular double stranded RNA (dsRNA)-induced expression of IFNB1 and interferon-stimulated genes ISG15, IFIT1/ISG56, CXCL10, OASL and CCL5/RANTES. Promotes establishment of an antiviral state by TLR3 ligand and TLR3-mediated chemokine induction following infection by hepatitis C virus. Acts as a restriction factor of Zika virus through direct interaction with the viral RNA via its C-terminal region. This chain is E3 ubiquitin-protein ligase TRIM56, found in Homo sapiens (Human).